The chain runs to 88 residues: Small ribosomal subunit protein bS16 (88 aa).

This sequence belongs to the bacterial ribosomal protein bS16 family.

In Baumannia cicadellinicola subsp. Homalodisca coagulata, this protein is Small ribosomal subunit protein bS16.